Consider the following 1018-residue polypeptide: Contactin-1 (1018 aa).

An N-terminal signal peptide occupies residues 1–20 (MKMWLLFSLLVIISFKTCLS). 6 consecutive Ig-like C2-type domains span residues 41-131 (PIFE…ATLS), 137-223 (PFPP…KSVF), 241-326 (PADI…ARIY), 331-407 (PEWV…AELK), 413-500 (PTFE…GTLV), and 504-601 (PTRI…LVVR). Cystine bridges form between C65–C114 and C158–C211. N208 and N258 each carry an N-linked (GlcNAc...) asparagine glycan. Cysteines 263 and 310 form a disulfide. N338 is a glycosylation site (N-linked (GlcNAc...) asparagine). Cystine bridges form between C352–C391 and C436–C484. N457, N473, N494, and N521 each carry an N-linked (GlcNAc...) asparagine glycan. A disulfide bridge links C526 with C583. N-linked (GlcNAc...) asparagine glycosylation occurs at N591. Fibronectin type-III domains are found at residues 606 to 704 (PPGG…TDGA), 709 to 806 (APSD…SAQD), 811 to 906 (APTA…APPS), and 907 to 1000 (QPPR…ILSP). Disordered regions lie at residues 698-718 (KIKT…GGGG) and 891-910 (PPSD…QPPR). S999 is lipidated: GPI-anchor amidated serine. Positions 1000 to 1018 (PCLLGFLLPALGILVYLEF) are cleaved as a propeptide — removed in mature form.

Belongs to the immunoglobulin superfamily. Contactin family. In terms of assembly, monomer. Interacts with CNTNAP1 in cis form. Binds to the carbonic-anhydrase like domain of PTPRZ1. Interacts with NOTCH1 and TNR. Detected in a complex with NRCAM and PTPRB. Interacts with TASOR.

The protein localises to the cell membrane. Functionally, contactins mediate cell surface interactions during nervous system development. Involved in the formation of paranodal axo-glial junctions in myelinated peripheral nerves and in the signaling between axons and myelinating glial cells via its association with CNTNAP1. Participates in oligodendrocytes generation by acting as a ligand of NOTCH1. Its association with NOTCH1 promotes NOTCH1 activation through the released notch intracellular domain (NICD) and subsequent translocation to the nucleus. Interaction with TNR induces a repulsion of neurons and an inhibition of neurite outgrowth. In Bos taurus (Bovine), this protein is Contactin-1 (CNTN1).